Consider the following 143-residue polypeptide: MNSFALLLVCIQACLVQSVFSQCTSRAAVAADRGIIGGYGLGAPCGLGYGLEAPYGWAGYADYGYPAGAYGIDAYGGIGEGNVAVAGELPVAGTTAVAGQVPIMGAVKFGGDVCAAGSVSIAGKCACGCXEGYGYGLGSPYLY.

A signal peptide spans Met1–Ser21.

It belongs to the chorion protein family.

Functionally, this protein is one of many from the eggshell of the gypsy moth. The polypeptide is Chorion class A protein Ld5 (Lymantria dispar (Gypsy moth)).